A 431-amino-acid polypeptide reads, in one-letter code: Glucose-1-phosphate adenylyltransferase (431 aa).

Residues G163, 178–179, and S210 each bind alpha-D-glucose 1-phosphate; that span reads EK.

It belongs to the bacterial/plant glucose-1-phosphate adenylyltransferase family. As to quaternary structure, homotetramer.

It catalyses the reaction alpha-D-glucose 1-phosphate + ATP + H(+) = ADP-alpha-D-glucose + diphosphate. It participates in glycan biosynthesis; glycogen biosynthesis. Functionally, involved in the biosynthesis of ADP-glucose, a building block required for the elongation reactions to produce glycogen. Catalyzes the reaction between ATP and alpha-D-glucose 1-phosphate (G1P) to produce pyrophosphate and ADP-Glc. The polypeptide is Glucose-1-phosphate adenylyltransferase (Synechococcus sp. (strain WH7803)).